Reading from the N-terminus, the 346-residue chain is Fe(3+) ions import ATP-binding protein FbpC 2 (346 aa).

Residues 5–235 (LEVDGVDKSF…PVDVPTAEFI (231 aa)) enclose the ABC transporter domain. 37 to 44 (GPSGCGKT) contacts ATP.

The protein belongs to the ABC transporter superfamily. Fe(3+) ion importer (TC 3.A.1.10) family. The complex is composed of two ATP-binding proteins (FbpC), two transmembrane proteins (FbpB) and a solute-binding protein (FbpA).

It localises to the cell membrane. The catalysed reaction is Fe(3+)(out) + ATP + H2O = Fe(3+)(in) + ADP + phosphate + H(+). Functionally, part of the ABC transporter complex FbpABC involved in Fe(3+) ions import. Responsible for energy coupling to the transport system. The chain is Fe(3+) ions import ATP-binding protein FbpC 2 from Rhodococcus jostii (strain RHA1).